A 678-amino-acid polypeptide reads, in one-letter code: UvrABC system protein B (678 aa).

Residues 26–185 (EGLEDGEAFQ…LTTMQYTRND (160 aa)) enclose the Helicase ATP-binding domain. Residue 39–46 (GVTGSGKT) participates in ATP binding. A Beta-hairpin motif is present at residues 92–115 (YYDYYQPEAYVPASDTYIAKDSSV). In terms of domain architecture, Helicase C-terminal spans 430 to 596 (QVDDLLGEIR…KLNKKITDIL (167 aa)). The segment at 597–630 (EDSPYAPKPGASAAKLKAAEADGEYSPQEMQRMT) is disordered. The UVR domain occupies 635-670 (ASEIKRMEKQMYQAAKDLDFELAAKLRDDLKRLKSS).

The protein belongs to the UvrB family. Forms a heterotetramer with UvrA during the search for lesions. Interacts with UvrC in an incision complex.

The protein resides in the cytoplasm. The UvrABC repair system catalyzes the recognition and processing of DNA lesions. A damage recognition complex composed of 2 UvrA and 2 UvrB subunits scans DNA for abnormalities. Upon binding of the UvrA(2)B(2) complex to a putative damaged site, the DNA wraps around one UvrB monomer. DNA wrap is dependent on ATP binding by UvrB and probably causes local melting of the DNA helix, facilitating insertion of UvrB beta-hairpin between the DNA strands. Then UvrB probes one DNA strand for the presence of a lesion. If a lesion is found the UvrA subunits dissociate and the UvrB-DNA preincision complex is formed. This complex is subsequently bound by UvrC and the second UvrB is released. If no lesion is found, the DNA wraps around the other UvrB subunit that will check the other stand for damage. This chain is UvrABC system protein B, found in Hydrogenovibrio crunogenus (strain DSM 25203 / XCL-2) (Thiomicrospira crunogena).